Consider the following 353-residue polypeptide: Chemerin-like receptor 2 (353 aa).

Over 1–41 (MEVSKEMLFEELDNYSYALDYYSQESDPEEKVYLGLVHWIS) the chain is Extracellular. N-linked (GlcNAc...) asparagine glycosylation occurs at Asn14. The helical transmembrane segment at 42 to 62 (LFLYALAFVLGIPGNAIVIWL) threads the bilayer. At 63–73 (MGFKWKKTVTT) the chain is on the cytoplasmic side. The chain crosses the membrane as a helical span at residues 74–94 (LWFLNLAIADFIFVLFLPLYI). Topologically, residues 95 to 112 (SYVALSFHWPFGLWLCKV) are extracellular. Cys110 and Cys187 are disulfide-bonded. A helical membrane pass occupies residues 113–133 (NSFIAQLNMFSSVFFLTVISL). Over 134 to 154 (DRYIHLLHPGLSHRHRTLKSS) the chain is Cytoplasmic. The chain crosses the membrane as a helical span at residues 155-175 (LVVVILVWLLASLLGGPTLYF). Residues 176–210 (RDTMEVNNHIICYNNFQEHELTLMRHHVLTWVKFL) lie on the Extracellular side of the membrane. Residues 211–231 (FGYLFPLLTMSSCYLCLIFKM) form a helical membrane-spanning segment. Over 232–247 (KKRNILISRKHLWMIL) the chain is Cytoplasmic. The chain crosses the membrane as a helical span at residues 248–268 (SVVIAFLVCWTPYHLFSIWEL). Over 269–286 (SIHHNSSFQNVLQGGIPL) the chain is Extracellular. A helical transmembrane segment spans residues 287-307 (STGLAFLNSCLNPILYVLISK). The Cytoplasmic segment spans residues 308-353 (TFQARFRASVAEVLKRSLWEASCSGTVSEQLRSAETKSLSLLETAQ).

This sequence belongs to the chemokine-like receptor (CMKLR) family. As to expression, high expressed in white adipose tissue and skeletal muscle. Expressed in hippocampus and cortex.

It localises to the cell membrane. Receptor for chemoattractant adipokine chemerin/RARRES2 suggesting a role for this receptor in the regulation of inflammation and energy homesotasis. Signals mainly via beta-arrestin pathway. Binding of RARRES2 activates weakly G proteins, calcium mobilization and MAPK1/MAPK3 (ERK1/2) phosphorylation too. Acts also as a receptor for TAFA1, mediates its effects on neuronal stem-cell proliferation and differentiation via the activation of ROCK/ERK and ROCK/STAT3 signaling pathway. In Mus musculus (Mouse), this protein is Chemerin-like receptor 2 (Cmklr2).